The chain runs to 373 residues: Anhydro-N-acetylmuramic acid kinase (373 aa).

12 to 19 contributes to the ATP binding site; it reads GTSLDGVD.

This sequence belongs to the anhydro-N-acetylmuramic acid kinase family.

It carries out the reaction 1,6-anhydro-N-acetyl-beta-muramate + ATP + H2O = N-acetyl-D-muramate 6-phosphate + ADP + H(+). It functions in the pathway amino-sugar metabolism; 1,6-anhydro-N-acetylmuramate degradation. It participates in cell wall biogenesis; peptidoglycan recycling. Its function is as follows. Catalyzes the specific phosphorylation of 1,6-anhydro-N-acetylmuramic acid (anhMurNAc) with the simultaneous cleavage of the 1,6-anhydro ring, generating MurNAc-6-P. Is required for the utilization of anhMurNAc either imported from the medium or derived from its own cell wall murein, and thus plays a role in cell wall recycling. The protein is Anhydro-N-acetylmuramic acid kinase of Salmonella dublin (strain CT_02021853).